A 182-amino-acid chain; its full sequence is Bifunctional protein PyrR (182 aa).

A PRPP-binding motif is present at residues 99-111; sequence IVLVDDVIFTGRT.

This sequence belongs to the purine/pyrimidine phosphoribosyltransferase family. PyrR subfamily. As to quaternary structure, homodimer and homohexamer; in equilibrium.

It catalyses the reaction UMP + diphosphate = 5-phospho-alpha-D-ribose 1-diphosphate + uracil. Regulates transcriptional attenuation of the pyrimidine nucleotide (pyr) operon by binding in a uridine-dependent manner to specific sites on pyr mRNA. This disrupts an antiterminator hairpin in the RNA and favors formation of a downstream transcription terminator, leading to a reduced expression of downstream genes. Its function is as follows. Also displays a weak uracil phosphoribosyltransferase activity which is not physiologically significant. In Caldicellulosiruptor saccharolyticus (strain ATCC 43494 / DSM 8903 / Tp8T 6331), this protein is Bifunctional protein PyrR.